Reading from the N-terminus, the 1117-residue chain is Protein cup (1117 aa).

The segment at Met-1–Ser-106 is disordered. Pro residues-rich tracts occupy residues Tyr-54–Val-64 and Cys-95–Pro-104. A phosphoserine mark is found at Ser-263 and Ser-270. Residues Ser-270–Ser-326 form a disordered region. Over residues Glu-283–Pro-294 the composition is skewed to polar residues. The YXXXXLphi motif 1 motif lies at Tyr-327–Met-333. Residues Ser-347 and Ser-350 each carry the phosphoserine modification. Positions Glu-363–Arg-369 match the YXXXXLphi motif 2 motif. Disordered stretches follow at residues Ile-493 to Ser-528, Lys-596 to His-618, Thr-654 to Phe-673, Ser-679 to Ser-728, Gly-984 to Pro-1004, and Ile-1016 to Phe-1051. At Thr-503 the chain carries Phosphothreonine. Ser-509, Ser-513, Ser-520, Ser-523, and Ser-524 each carry phosphoserine. Low complexity-rich tracts occupy residues Ser-679–Asn-712 and Gln-988–Gln-1001.

Belongs to the 4E-T/EIF4E-T family. In terms of assembly, component of the osk RNP complex, which is composed of at least exu, yps, aret/bruno, cup, and the mRNA of osk. Interacts with the decapping activators me31B and tral. Component of the nanos RNP complex, which is composed of at least smg, cup, tral, me31B, the CCR4-NOT complex members Rga/NOT2 and Caf1, and the mRNA of nanos (nos). Interacts with btz. Recruited to the 3'-UTR of nos and osk mRNAs by smg and btz, respectively. Forms a ribonucleoprotein complex (RNP) containing at least me31B, eIF4E1, cup, tral and pAbp; this interaction is required for the translational silencing of maternal mRNAs during the maternal-to-zygotic transition. No interaction was detected with pAbp in 1-5 hour embryos. Interacts with osk and vas. Interacts with Pop2, twin/CCR4, Rga, Not3 and Not1 which are all core components of the CCR4-NOT deadenylase complex; interaction with the complex is required for cup deadenylation activity. Interacts with nanos. Interacts with smg. Interacts (via YXXXXLphi motifs) with eIF4E1; the interaction promotes retention of cup in the cytoplasm. Interacts with orb; the interaction represses the orb positive autoregulatory loop. Interacts with Nup154. As to expression, predominantly expressed in ovaries and in 0-2 hours old embryos. Weakly expressed in testis. Expressed in young embryos through stage 9, then it decreases throughout the rest of embryogenesis. In ovaries, it is expressed in germ cells throughout pre-vitellogenic development, but is not expressed in the somatic follicle cells. In germarial cysts, the protein (and not the transcripts) is transported selectively into the oocyte.

It localises to the cytoplasm. The protein localises to the nucleus. The protein resides in the cytoplasmic ribonucleoprotein granule. In terms of biological role, adapter protein that plays a central role in localization of transcripts in the oocyte and in young embryos. Maintains RNA targets in a repressed state by promoting their deadenylation and protects deadenylated mRNAs from further degradation. Binds to and recruits eIF-4E to the 3'-UTR of some mRNA targets which prevents interaction between eIF4E1 and eIF4G. This may contribute to translational repression but does not appear to be necessary for it to occur. Can promote translational repression independently of deadenylation and eIF4E1 binding. Required for correct localization of eIF4E1 in the developing oocyte. Required for translational repression of oskar (osk) mRNA. Also required for the translational repression of nanos (nos) mRNA. Promotes the accumulation of the germ plasm components osk, vas and stau at the posterior pole of the oocyte and is required for germ cell development. Represses orb positive autoregulatory activity which prevents premature activation of orb and ensures its accumulation specifically in the developing oocyte. In 0-1 hour embryos, forms a complex with me31B, cup, tral and pAbp which binds to various mRNAs including maternal mRNAs, and down-regulates their expression during the maternal-to-zygotic transition. This chain is Protein cup (cup), found in Drosophila melanogaster (Fruit fly).